The sequence spans 223 residues: Adenylate kinase (223 aa).

Residue 10–15 (GSGKGT) participates in ATP binding. Residues 30–59 (ESGAIFREHIGGGTELGMKAKGYIDKGELV) are NMP. AMP is bound by residues Ser31, Arg36, 57–59 (ELV), 84–87 (GFPR), and Gln91. The segment at 125–164 (GRRLCANDPNHPNNIFIDAIKPNGDKCRVCGGDLKTRSDD) is LID. ATP is bound at residue Arg126. Residues Arg161 and Arg173 each coordinate AMP. Residue Gly209 coordinates ATP.

It belongs to the adenylate kinase family. Monomer.

The protein resides in the cytoplasm. The enzyme catalyses AMP + ATP = 2 ADP. It participates in purine metabolism; AMP biosynthesis via salvage pathway; AMP from ADP: step 1/1. Functionally, catalyzes the reversible transfer of the terminal phosphate group between ATP and AMP. Plays an important role in cellular energy homeostasis and in adenine nucleotide metabolism. The chain is Adenylate kinase from Solidesulfovibrio magneticus (strain ATCC 700980 / DSM 13731 / RS-1) (Desulfovibrio magneticus).